The following is a 20-amino-acid chain: U27-ctenitoxin-Pn1a (20 aa).

A disordered region spans residues 1–20; it reads LAKRADICQPGKTSQRACET. The span at 11–20 shows a compositional bias: polar residues; the sequence is GKTSQRACET.

In terms of processing, contains 4 disulfide bonds. Expressed by the venom gland.

The protein localises to the secreted. Its function is as follows. Has a vascular smooth muscle contracting activity. Causes short-lived contractions of both arterial and venous rabbit vessels. This is U27-ctenitoxin-Pn1a from Phoneutria nigriventer (Brazilian armed spider).